Consider the following 406-residue polypeptide: Imidazolonepropionase (406 aa).

Residues H72 and H74 each coordinate Fe(3+). H72 and H74 together coordinate Zn(2+). 4-imidazolone-5-propanoate contacts are provided by R81, Y144, and H177. An N-formimidoyl-L-glutamate-binding site is contributed by Y144. H242 serves as a coordination point for Fe(3+). H242 contacts Zn(2+). Q245 provides a ligand contact to 4-imidazolone-5-propanoate. D317 lines the Fe(3+) pocket. D317 lines the Zn(2+) pocket. Residues N319 and G321 each contribute to the N-formimidoyl-L-glutamate site. Residue T322 coordinates 4-imidazolone-5-propanoate.

The protein belongs to the metallo-dependent hydrolases superfamily. HutI family. It depends on Zn(2+) as a cofactor. Fe(3+) is required as a cofactor.

Its subcellular location is the cytoplasm. The enzyme catalyses 4-imidazolone-5-propanoate + H2O = N-formimidoyl-L-glutamate. It functions in the pathway amino-acid degradation; L-histidine degradation into L-glutamate; N-formimidoyl-L-glutamate from L-histidine: step 3/3. Catalyzes the hydrolytic cleavage of the carbon-nitrogen bond in imidazolone-5-propanoate to yield N-formimidoyl-L-glutamate. It is the third step in the universal histidine degradation pathway. This Yersinia pseudotuberculosis serotype O:3 (strain YPIII) protein is Imidazolonepropionase.